The following is a 171-amino-acid chain: Orotate phosphoribosyltransferase (171 aa).

5-phospho-alpha-D-ribose 1-diphosphate contacts are provided by residues Arg85, Lys86, Arg88, His90, and 110-118 (EDVVTTGNS). 2 residues coordinate orotate: Thr114 and Arg142.

This sequence belongs to the purine/pyrimidine phosphoribosyltransferase family. PyrE subfamily. In terms of assembly, homodimer. It depends on Mg(2+) as a cofactor.

The catalysed reaction is orotidine 5'-phosphate + diphosphate = orotate + 5-phospho-alpha-D-ribose 1-diphosphate. The protein operates within pyrimidine metabolism; UMP biosynthesis via de novo pathway; UMP from orotate: step 1/2. Functionally, catalyzes the transfer of a ribosyl phosphate group from 5-phosphoribose 1-diphosphate to orotate, leading to the formation of orotidine monophosphate (OMP). The protein is Orotate phosphoribosyltransferase of Thermoplasma acidophilum (strain ATCC 25905 / DSM 1728 / JCM 9062 / NBRC 15155 / AMRC-C165).